The chain runs to 206 residues: Protein GET1 (206 aa).

The Lumenal portion of the chain corresponds to 1-4; sequence MPSL. A helical transmembrane segment spans residues 5–24; that stretch reads LITVLFLNVIIYVVNTVGAA. Over 25–110 the chain is Cytoplasmic; the sequence is TVDGLLWLLY…TFDMTIKIAR (86 aa). Residues 75–100 adopt a coiled-coil conformation; the sequence is AKLRRRHDKALEAYEAKNNELTQSKS. The helical transmembrane segment at 111-131 threads the bilayer; it reads WAATSGLMLFLQFWYSKTPIF. The Lumenal portion of the chain corresponds to 132 to 155; sequence TLPPGWIPWQVQWVLSFPRAPMGT. The chain crosses the membrane as a helical span at residues 156-172; it reads VSIQIWGGACATVVALV. At 173 to 206 the chain is on the cytoplasmic side; that stretch reads GDAMKASLAYVSKPKIDRIKLGATMEGKEGKKRQ.

The protein belongs to the WRB/GET1 family. In terms of assembly, interacts with GET3.

The protein resides in the endoplasmic reticulum membrane. Its function is as follows. Required for the post-translational delivery of tail-anchored (TA) proteins to the endoplasmic reticulum. Acts as a membrane receptor for soluble GET3, which recognizes and selectively binds the transmembrane domain of TA proteins in the cytosol. This is Protein GET1 from Ajellomyces capsulatus (strain G186AR / H82 / ATCC MYA-2454 / RMSCC 2432) (Darling's disease fungus).